The sequence spans 480 residues: Aspartyl/glutamyl-tRNA(Asn/Gln) amidotransferase subunit B (480 aa).

This sequence belongs to the GatB/GatE family. GatB subfamily. As to quaternary structure, heterotrimer of A, B and C subunits.

The catalysed reaction is L-glutamyl-tRNA(Gln) + L-glutamine + ATP + H2O = L-glutaminyl-tRNA(Gln) + L-glutamate + ADP + phosphate + H(+). It catalyses the reaction L-aspartyl-tRNA(Asn) + L-glutamine + ATP + H2O = L-asparaginyl-tRNA(Asn) + L-glutamate + ADP + phosphate + 2 H(+). Allows the formation of correctly charged Asn-tRNA(Asn) or Gln-tRNA(Gln) through the transamidation of misacylated Asp-tRNA(Asn) or Glu-tRNA(Gln) in organisms which lack either or both of asparaginyl-tRNA or glutaminyl-tRNA synthetases. The reaction takes place in the presence of glutamine and ATP through an activated phospho-Asp-tRNA(Asn) or phospho-Glu-tRNA(Gln). In Streptococcus thermophilus (strain ATCC BAA-491 / LMD-9), this protein is Aspartyl/glutamyl-tRNA(Asn/Gln) amidotransferase subunit B.